Here is a 369-residue protein sequence, read N- to C-terminus: Protein pxr-1 (369 aa).

The segment at 1–23 (MGLAAAKNKRKLGTDPNNTKWSR) is disordered. The 55-residue stretch at 25-79 (ETTFGQKILRAQGWQPGEFLGAKDAAHAVHHTEASSSHIKVTLKDDNLGLGAKRN) folds into the G-patch domain. The interval 147-338 (EEDGVPQSDT…GTSTPTVTSS (192 aa)) is disordered. Positions 153–167 (QSDTVDQQVETVPSQ) are enriched in polar residues. Basic residues predominate over residues 218-227 (SKKKEKKDKK). Residues 228 to 237 (EKKDQKEKKD) show a composition bias toward basic and acidic residues. Basic residues predominate over residues 267–292 (KSKKDKKKEKKEKKDKKKDKKEKKRK). Over residues 304–318 (EDSKSKAQKRTKDGA) the composition is skewed to basic and acidic residues. Positions 322–338 (TSTPGGSGTSTPTVTSS) are enriched in low complexity.

This sequence belongs to the PINX1 family.

Its subcellular location is the nucleus. It localises to the nucleolus. In terms of biological role, involved in rRNA-processing at A0, A1 and A2 sites and negatively regulates telomerase. The protein is Protein pxr-1 (pxr-1) of Neurospora crassa (strain ATCC 24698 / 74-OR23-1A / CBS 708.71 / DSM 1257 / FGSC 987).